The primary structure comprises 294 residues: Bidirectional sugar transporter SWEET13 (294 aa).

Over 1–7 the chain is Extracellular; sequence MALTNNL. Residues 8 to 28 traverse the membrane as a helical segment; sequence WAFVFGILGNIISFVVFLAPV. One can recognise a MtN3/slv 1 domain in the interval 10 to 97; it reads FVFGILGNII…VLFVSYANKK (88 aa). At 29–42 the chain is on the cytoplasmic side; the sequence is PTFVRICKKKSTEG. The helical transmembrane segment at 43–63 threads the bilayer; it reads FQSLPYVSALFSAMLWIYYAM. Over 64 to 69 the chain is Extracellular; sequence QKDGTA. Residues 70–90 traverse the membrane as a helical segment; that stretch reads FLLITINAFGCVIETIYIVLF. Residues 91 to 104 lie on the Cytoplasmic side of the membrane; the sequence is VSYANKKTRISTLK. Residues 105–125 form a helical membrane-spanning segment; that stretch reads VLGLLNFLGFAAIVLVCELLT. The Extracellular portion of the chain corresponds to 126–132; it reads KGSTREK. Residues 133–153 traverse the membrane as a helical segment; the sequence is VLGGICVGFSVSVFAAPLSIM. The MtN3/slv 2 domain maps to 133-216; the sequence is VLGGICVGFS…MILYIIFKYY (84 aa). At 154-166 the chain is on the cytoplasmic side; sequence RVVVRTRSVEFMP. A helical transmembrane segment spans residues 167 to 187; sequence FSLSLFLTISAVTWLFYGLAI. Over 188-192 the chain is Extracellular; that stretch reads KDFYV. The helical transmembrane segment at 193–213 threads the bilayer; sequence ALPNVLGAFLGAVQMILYIIF. The Cytoplasmic segment spans residues 214–294; that stretch reads KYYKTPVAQK…NKDVQKQSQV (81 aa). The segment at 273–294 is disordered; that stretch reads KSQNMTDPKDQINKDVQKQSQV. Residues 279–294 show a composition bias toward basic and acidic residues; sequence DPKDQINKDVQKQSQV.

It belongs to the SWEET sugar transporter family. In terms of assembly, forms heterooligomers with SWEET1, SWEET3, SWEET6, SWEET7, SWEET8, SWEET9, SWEET11 and SWEET17. As to expression, expressed at low levels in leaves.

The protein localises to the cell membrane. Mediates both low-affinity uptake and efflux of sugar across the plasma membrane. Involved in nurturing the male gametophyte. The chain is Bidirectional sugar transporter SWEET13 from Arabidopsis thaliana (Mouse-ear cress).